Reading from the N-terminus, the 141-residue chain is Ribosome-binding factor A (141 aa).

The segment at 120 to 141 (SPHVQRDLQENDDQEDDSEGSL) is disordered. The span at 129 to 141 (ENDDQEDDSEGSL) shows a compositional bias: acidic residues.

The protein belongs to the RbfA family. As to quaternary structure, monomer. Binds 30S ribosomal subunits, but not 50S ribosomal subunits or 70S ribosomes.

It localises to the cytoplasm. In terms of biological role, one of several proteins that assist in the late maturation steps of the functional core of the 30S ribosomal subunit. Associates with free 30S ribosomal subunits (but not with 30S subunits that are part of 70S ribosomes or polysomes). Required for efficient processing of 16S rRNA. May interact with the 5'-terminal helix region of 16S rRNA. This Zymomonas mobilis subsp. mobilis (strain ATCC 31821 / ZM4 / CP4) protein is Ribosome-binding factor A.